Here is a 203-residue protein sequence, read N- to C-terminus: Probable deoxycytidylate deaminase (203 aa).

Residues 27-163 (HWDDYFMATS…PTYRASKRML (137 aa)) form the CMP/dCMP-type deaminase domain. Zn(2+) is bound at residue H102. The Proton donor role is filled by E104. Zn(2+) contacts are provided by C128 and C131.

The protein belongs to the cytidine and deoxycytidylate deaminase family. Requires Zn(2+) as cofactor.

It catalyses the reaction dCMP + H2O + H(+) = dUMP + NH4(+). Supplies the nucleotide substrate for thymidylate synthetase. This is Probable deoxycytidylate deaminase from Drosophila melanogaster (Fruit fly).